We begin with the raw amino-acid sequence, 391 residues long: MAIFRDYSINPTEHDRTIGDRRRHRELVEKAIKDNLADIVSEESIIGESKSKKIKIPIRGLKEYKFLYGNNSSSVGSGTGNEKKGDIIGKEQMGNGSKGKGKGAGNSEGEDIYETEVTIEEVFSYLLEDLNLPNLDKKKYSEIVTDSSKKKAGYQKYGIRPRLAKKRTVIEKIKREQSRKRAIKELGKDDKVERLPFSEEDLRYHRIKEKPKKECNAAIMCVMDCSGSMDSTKKYLARSFFFILSKFIRMKYVNVEIAFISHSTVGREVTETEFFHKVESGGTYISSGLNTAMDIIKERFNPATWNIYGFYVSDGDNFTEDDERAIKSMRKFCEIANMIGYAEILPYSYSGTMKYKFDNYVKDKNFISSTIRNKEDLWPVLKKMLIKELKE.

Disordered regions lie at residues 1–20 and 75–109; these read MAIF…TIGD and VGSG…NSEG. The segment covering 96–106 has biased composition (gly residues); sequence GSKGKGKGAGN.

It belongs to the UPF0229 family.

This chain is UPF0229 protein CA_C0580, found in Clostridium acetobutylicum (strain ATCC 824 / DSM 792 / JCM 1419 / IAM 19013 / LMG 5710 / NBRC 13948 / NRRL B-527 / VKM B-1787 / 2291 / W).